We begin with the raw amino-acid sequence, 251 residues long: 16S rRNA (guanine(1405)-N(7))-methyltransferase (251 aa).

Residues Tyr56, 81-83 (HAS), Arg87, Ala111, Asp131, 157-158 (DV), Phe173, and Glu182 each bind S-adenosyl-L-methionine.

It belongs to the methyltransferase superfamily. Aminoglycoside resistance family.

It carries out the reaction guanosine(1405) in 16S rRNA + S-adenosyl-L-methionine = N(7)-methylguanosine(1405) in 16S rRNA + S-adenosyl-L-homocysteine. Specifically methylates the N(7) position of guanine 1405 in 16S rRNA. Confers resistance to various aminoglycosides, including kanamycin, tobramycin, amikacin, arbekacin, gentamicin, sisomicin and isepamicin. This is 16S rRNA (guanine(1405)-N(7))-methyltransferase (rmtB) from Serratia marcescens.